Reading from the N-terminus, the 1196-residue chain is NACHT, LRR and PYD domains-containing protein 1b allele 5 (1196 aa).

The segment at 1 to 22 (MEESPPKQKSNTKVTQHEGQQD) is disordered. The 310-residue stretch at 126–435 (QLVIIEGAAG…EFFAAISCIL (310 aa)) folds into the NACHT domain. 132 to 139 (GAAGIGKS) serves as a coordination point for ATP. 2 LRR repeats span residues 627 to 647 (NLEGLDLSGNSLRYSVVQSLC) and 684 to 704 (SLTELYLQLNDLGDDGVRMLC). Residues 789–922 (FWGPTGPVAT…GYTVLKNPSF (134 aa)) are ZU5. One can recognise an FIIND domain in the interval 789–1072 (FWGPTGPVAT…KFDHLCDQEF (284 aa)). Residues 923–1072 (SPMGVVLRII…KFDHLCDQEF (150 aa)) are UPA. The 84-residue stretch at 1106-1189 (HFMDQHREQL…HLVMDLFEKS (84 aa)) folds into the CARD domain.

It belongs to the NLRP family. As to quaternary structure, interacts with DPP9; leading to inhibit activation of the inflammasome. DPP9 acts via formation of a ternary complex, composed of a DPP9 homodimer, one full-length Nlrp1b protein, and one cleaved C-terminus of Nlrp1b (NACHT, LRR and PYD domains-containing protein 1b, C-terminus). Interacts with DPP8; leading to inhibit activation of the inflammasome, probably via formation of a ternary complex with DPP8. Interacts (via LRR repeats) with BCL2 and BCL2L1 (via the loop between motifs BH4 and BH3). Interacts with NOD2; this interaction may increase IL1B release. Interacts with EIF2AK2/PKR; this interaction requires EIF2AK2 activity, is accompanied by EIF2AK2 autophosphorylation and promotes inflammasome assembly in response to B.anthracis lethal toxin. Interacts with MEFV; this interaction targets Nlrp1b to degradation by autophagy, hence preventing excessive IL1B- and IL18-mediated inflammation. In terms of assembly, interacts with the C-terminal part of Nlrp1b (NACHT, LRR and PYD domains-containing protein 1b, C-terminus) in absence of pathogens and other damage-associated signals. Interacts with the N-terminal part of Nlrp1b (NACHT, LRR and PYD domains-containing protein 1b, N-terminus) in absence of pathogens and other damage-associated signals. Homomultimer; forms the Nlrp1b inflammasome polymeric complex, a filament composed of homopolymers of this form in response to pathogens and other damage-associated signals. The Nlrp1b inflammasome polymeric complex directly recruits pro-caspase-1 (proCASP1) independently of PYCARD/ASC. Interacts (via CARD domain) with CASP1 (via CARD domain); leading to CASP1 activation. Autocatalytically cleaved. Autocatalytic cleavage in FIIND region occurs constitutively, prior to activation signals, and is required for inflammasome activity (IL1B release), possibly by facilitating CASP1 binding. Both N- and C-terminal parts remain associated non-covalently. Post-translationally, ubiquitinated by the N-end rule pathway in response to pathogens and other damage-associated signals, leading to its degradation by the proteasome and subsequent release of the cleaved C-terminal part of the protein (NACHT, LRR and PYD domains-containing protein 1b, C-terminus), which polymerizes and forms the Nlrp1b inflammasome. In terms of processing, (Microbial infection) Cleavage by B.anthracis lethal toxin (LT) endopeptidase promotes ubiquitination and degradation of the N-terminal part, releasing the cleaved C-terminal part of the protein (NACHT, LRR and PYD domains-containing protein 1b, C-terminus), which polymerizes and forms the Nlrp1b inflammasome. In terms of tissue distribution, expressed in macrophages.

The protein resides in the cytoplasm. It localises to the cytosol. Its subcellular location is the inflammasome. Its activity is regulated as follows. Activated by cleavage by B.anthracis lethal toxin (LT) endopeptidase. Cleavage by LT promotes ubiquitination and degradation of the N-terminal part, releasing the cleaved C-terminal part of the protein (NACHT, LRR and PYD domains-containing protein 1b, C-terminus), which polymerizes and forms the Nlrp1b inflammasome. Nlrp1b inflammasome is inhibited by DPP8 and DPP9, which sequester the C-terminal fragment of Nlrp1b (NACHT, LRR and PYD domains-containing protein 1b, C-terminus) in a ternary complex, thereby preventing Nlrp1b oligomerization and activation. Nlrp1b inflammasome is activated by Val-boroPro (Talabostat, PT-100), an inhibitor of dipeptidyl peptidases DPP8 and DPP9. Val-boroPro relieves inhibition of DPP8 and/or DPP9 by promoting disruption of the ternary complex, releasing its C-terminal part from autoinhibition. Activated by metabolic inhibitors, such as 2-deoxy-D-glucose and sodium azide. Not activated by muramyl dipeptide, nor by full-length bacterial peptidoglycan. Acts as the sensor component of the Nlrp1b inflammasome, which mediates inflammasome activation in response to various pathogen-associated signals, leading to subsequent pyroptosis. Inflammasomes are supramolecular complexes that assemble in the cytosol in response to pathogens and other damage-associated signals and play critical roles in innate immunity and inflammation. Acts as a recognition receptor (PRR): recognizes specific pathogens and other damage-associated signals, such as B.anthracis lethal toxin (LT) or Val-boroPro inhibitor, and mediates the formation of the inflammasome polymeric complex. In response to pathogen-associated signals, the N-terminal part of Nlrp1b is degraded by the proteasome, releasing the cleaved C-terminal part of the protein (NACHT, LRR and PYD domains-containing protein 1b, C-terminus), which polymerizes to initiate the formation of the inflammasome complex: the inflammasome directly recruits pro-caspase-1 (proCASP1) independently of PYCARD/ASC and promotes caspase-1 (CASP1) activation, which subsequently cleaves and activates inflammatory cytokines IL1B and IL18 and gasdermin-D (GSDMD), leading to pyroptosis. In the absence of GSDMD expression, the Nlrp1b inflammasome is able to recruit and activate CASP8, leading to activation of gasdermin-E (GSDME). Activation of Nlrp1b inflammasome is also required for HMGB1 secretion; the active cytokines and HMGB1 stimulate inflammatory responses. Primary mediator of macrophage susceptibility to B.anthracis LT: in response to B.anthracis infection, macrophages and dendritic cells release IL1B and undergo pyroptosis. This early inflammatory response to the toxin increases resistance to infection by B.anthracis spores. In terms of biological role, constitutes the precursor of the Nlrp1b inflammasome, which mediates autoproteolytic processing within the FIIND domain to generate the N-terminal and C-terminal parts, which are associated non-covalently in absence of pathogens and other damage-associated signals. Its function is as follows. Regulatory part that prevents formation of the Nlrp1b inflammasome: in absence of pathogens and other damage-associated signals, interacts with the C-terminal part of Nlrp1b (NACHT, LRR and PYD domains-containing protein 1b, C-terminus), preventing activation of the Nlrp1b inflammasome. In response to pathogen-associated signals, this part is ubiquitinated by the N-end rule pathway and degraded by the proteasome, releasing the cleaved C-terminal part of the protein, which polymerizes and forms the Nlrp1b inflammasome. Functionally, constitutes the active part of the Nlrp1b inflammasome. In absence of pathogens and other damage-associated signals, interacts with the N-terminal part of Nlrp1b (NACHT, LRR and PYD domains-containing protein 1b, N-terminus), preventing activation of the Nlrp1b inflammasome. In response to pathogen-associated signals, the N-terminal part of Nlrp1b is degraded by the proteasome, releasing this form, which polymerizes to form the Nlrp1b inflammasome complex: the Nlrp1b inflammasome complex then directly recruits pro-caspase-1 (proCASP1) and promotes caspase-1 (CASP1) activation, leading to gasdermin-D (GSDMD) cleavage and subsequent pyroptosis. This is NACHT, LRR and PYD domains-containing protein 1b allele 5 (Nlrp1b) from Mus musculus (Mouse).